The chain runs to 169 residues: Succinate dehydrogenase cytochrome b560 subunit, mitochondrial (169 aa).

The transit peptide at 1–29 directs the protein to the mitochondrion; it reads MAAFLLRHVSRHCLRAHLNAQLCIRNAAP. The Mitochondrial matrix portion of the chain corresponds to 30-62; the sequence is LGTTAKEEMERFWKKNTSSNRPLSPHLTIYKWS. The chain crosses the membrane as a helical span at residues 63–92; the sequence is LPMALSVCHRGSGIALSGGVSLFGLSALLL. The Mitochondrial intermembrane portion of the chain corresponds to 93-112; it reads PGNFESYLMFVKSLCLGPTL. Residues 113–137 form a helical membrane-spanning segment; it reads IYSAKFVLVFPLMYHSLNGIRHLLW. His127 is a binding site for heme b. Residues 138-144 are Mitochondrial matrix-facing; the sequence is DLGKGLA. Residues 145-166 form a helical membrane-spanning segment; it reads IPQVWLSGVAVVVLAVLSSGGL. Residues 167 to 169 are Mitochondrial intermembrane-facing; the sequence is AAL.

This sequence belongs to the cytochrome b560 family. In terms of assembly, component of complex II composed of four subunits: the flavoprotein (FP) SDHA, iron-sulfur protein (IP) SDHB, and a cytochrome b560 composed of SDHC and SDHD. Heme b serves as cofactor.

Its subcellular location is the mitochondrion inner membrane. The protein operates within carbohydrate metabolism; tricarboxylic acid cycle. In terms of biological role, membrane-anchoring subunit of succinate dehydrogenase (SDH) that is involved in complex II of the mitochondrial electron transport chain and is responsible for transferring electrons from succinate to ubiquinone (coenzyme Q). SDH also oxidizes malate to the non-canonical enol form of oxaloacetate, enol-oxaloacetate. Enol-oxaloacetate, which is a potent inhibitor of the succinate dehydrogenase activity, is further isomerized into keto-oxaloacetate. This Mus musculus (Mouse) protein is Succinate dehydrogenase cytochrome b560 subunit, mitochondrial (Sdhc).